Consider the following 271-residue polypeptide: MMIHGFQSSHQDFSFGPWKLTASKTHIMKSADVEKLADELHMPSLPEMMFGDNVLRIQHGSGFGIEFNATDALRCVNNYQGMLKVACAEEWQESRTEGEHSKEVIKPYDWTYTTDYKGTLLGESLKLKVVPTTDHIDTEKLKAREQIKFFEEVLLFEDELHDHGVSSLSVKIRVMPSSFFLLLRFFLRIDGVLIRMNDTRLYHEADKTYMLREYTSRESKIANLMHVPPSLFTEPNEISQYLPIKEAVCEKLVFPERIDPNPVDSQSTPSE.

N6-acetyllysine is present on K106. Residues 173 to 271 form an interaction with PPP2CA region; the sequence is RVMPSSFFLL…PVDSQSTPSE (99 aa). 2 positions are modified to phosphoserine: S265 and S270.

This sequence belongs to the TIP41 family. Interacts with PPP2CA. Interacts with PPP2CB, PPP4C and PPP6C. Interacts with IGBP1; the interaction is dependent on PPP2CA. Associates with a protein phosphatase 2A PP2A(C):IGBP1 complex. Interacts with PPP4C and PPP4R2.

The protein resides in the cytoplasm. In terms of biological role, may be a allosteric regulator of serine/threonine-protein phosphatase 2A (PP2A). Inhibits catalytic activity of the PP2A(D) core complex in vitro. The PP2A(C):TIPRL complex does not show phosphatase activity. Acts as a negative regulator of serine/threonine-protein phosphatase 4 probably by inhibiting the formation of the active PPP4C:PPP4R2 complex; the function is proposed to implicate it in DNA damage response by promoting H2AX phosphorylated on Ser-140 (gamma-H2AX). May play a role in the regulation of ATM/ATR signaling pathway controlling DNA replication and repair. This Mus musculus (Mouse) protein is TIP41-like protein (Tiprl).